We begin with the raw amino-acid sequence, 83 residues long: Large ribosomal subunit protein eL31 (83 aa).

Belongs to the eukaryotic ribosomal protein eL31 family.

This chain is Large ribosomal subunit protein eL31, found in Methanococcus maripaludis (strain DSM 14266 / JCM 13030 / NBRC 101832 / S2 / LL).